An 88-amino-acid polypeptide reads, in one-letter code: MLTTQDKQNIIKENQQSEGDTGSPEVQVALLTARINDLQGHFATHKKDNHSRRGLLRLVSQRRKLLDYLHGKDVERYRALIKKLNLRR.

Residues 1–20 (MLTTQDKQNIIKENQQSEGD) show a composition bias toward polar residues. Positions 1 to 24 (MLTTQDKQNIIKENQQSEGDTGSP) are disordered.

The protein belongs to the universal ribosomal protein uS15 family. In terms of assembly, part of the 30S ribosomal subunit. Forms a bridge to the 50S subunit in the 70S ribosome, contacting the 23S rRNA.

Its function is as follows. One of the primary rRNA binding proteins, it binds directly to 16S rRNA where it helps nucleate assembly of the platform of the 30S subunit by binding and bridging several RNA helices of the 16S rRNA. In terms of biological role, forms an intersubunit bridge (bridge B4) with the 23S rRNA of the 50S subunit in the ribosome. This Francisella philomiragia subsp. philomiragia (strain ATCC 25017 / CCUG 19701 / FSC 153 / O#319-036) protein is Small ribosomal subunit protein uS15.